The primary structure comprises 845 residues: Meiotically up-regulated gene 4 protein (845 aa).

The tract at residues 122–158 (LSTTDEQPKEPSIISISSSSSDPSSSPPPSSSLLKTP) is disordered. The segment covering 132-145 (PSIISISSSSSDPS) has biased composition (low complexity). The helical transmembrane segment at 726-746 (FLVFLTFTGMTLFILYQLTFP) threads the bilayer.

Its subcellular location is the membrane. Functionally, has a role in meiosis. The sequence is that of Meiotically up-regulated gene 4 protein (mug4) from Schizosaccharomyces pombe (strain 972 / ATCC 24843) (Fission yeast).